The sequence spans 125 residues: Small ribosomal subunit protein uS12m (125 aa).

The disordered stretch occupies residues 1 to 27 (MPTKNQLIRHGREEKRRTDRTRALDQC). Residues 10–23 (HGREEKRRTDRTRA) show a composition bias toward basic and acidic residues.

The protein belongs to the universal ribosomal protein uS12 family.

Its subcellular location is the mitochondrion. Functionally, protein S12 is involved in the translation initiation step. The polypeptide is Small ribosomal subunit protein uS12m (RPS12) (Triticum aestivum (Wheat)).